The sequence spans 248 residues: Pyridoxine 5'-phosphate synthase (248 aa).

Asn-10 is a 3-amino-2-oxopropyl phosphate binding site. Position 12 to 13 (12 to 13) interacts with 1-deoxy-D-xylulose 5-phosphate; sequence DH. Arg-21 serves as a coordination point for 3-amino-2-oxopropyl phosphate. His-46 functions as the Proton acceptor in the catalytic mechanism. The 1-deoxy-D-xylulose 5-phosphate site is built by Arg-48 and His-53. The active-site Proton acceptor is the Glu-73. Thr-103 is a 1-deoxy-D-xylulose 5-phosphate binding site. His-194 serves as the catalytic Proton donor. 3-amino-2-oxopropyl phosphate is bound by residues Gly-195 and 216 to 217; that span reads GH.

The protein belongs to the PNP synthase family. As to quaternary structure, homooctamer; tetramer of dimers.

The protein localises to the cytoplasm. The enzyme catalyses 3-amino-2-oxopropyl phosphate + 1-deoxy-D-xylulose 5-phosphate = pyridoxine 5'-phosphate + phosphate + 2 H2O + H(+). It functions in the pathway cofactor biosynthesis; pyridoxine 5'-phosphate biosynthesis; pyridoxine 5'-phosphate from D-erythrose 4-phosphate: step 5/5. Catalyzes the complicated ring closure reaction between the two acyclic compounds 1-deoxy-D-xylulose-5-phosphate (DXP) and 3-amino-2-oxopropyl phosphate (1-amino-acetone-3-phosphate or AAP) to form pyridoxine 5'-phosphate (PNP) and inorganic phosphate. The protein is Pyridoxine 5'-phosphate synthase of Legionella pneumophila (strain Corby).